The sequence spans 127 residues: Dual endothelin-1/VEGF signal peptide receptor (127 aa).

Residues 1-69 (MSTFYVTAVP…EMKSRWNWGS (69 aa)) are Extracellular-facing. Residues 70–88 (ITCIMCFTCVGSQLSMSSS) traverse the membrane as a helical segment. Topologically, residues 89–127 (KASNFSGPLQLYQRGIGHITNPYRRPPAPAWPCSSSGTT) are cytoplasmic.

In terms of tissue distribution, prominently expressed in brain and heart tissues. Weakly expressed in aorta, adrenal gland, and lung tissues.

It is found in the cell membrane. Its function is as follows. In the Dahl salt-resistant strain, acts as a dual receptor for both endothelin-1 and the signal sequence of vascular endothelial growth factor A and does not act as a receptor for angiotensin-2. Does not bind the VEGFA mature protein. In the Dahl salt-sensitive strain, acts as a dual endothelin-1/angiotensin-2 receptor that is functionally coupled to a calcium-mobilizing transduction system, responding equivalently to both endothelin-1/EDN1 and angiotensin-2 peptides in a highly specific manner. May play a role in angiogenesis with a significant role in cardiovascular and neural development. The protein is Dual endothelin-1/VEGF signal peptide receptor of Rattus norvegicus (Rat).